The sequence spans 459 residues: MFS-type transporter SLC18B1 (459 aa).

At methionine 1 the chain carries N-acetylmethionine. Over residues 1 to 10 the composition is skewed to low complexity; that stretch reads MDEAGSPAPA. Positions 1–27 are disordered; it reads MDEAGSPAPAGTGGGDDPGGSTRETSR. The Cytoplasmic segment spans residues 1 to 33; sequence MDEAGSPAPAGTGGGDDPGGSTRETSRRLSREQ. A Phosphoserine modification is found at serine 21. A helical membrane pass occupies residues 34–54; the sequence is IFVLVSAASMNLGCMMTYSIL. The Extracellular portion of the chain corresponds to 55-70; it reads GPFFPKEAEKKGASNT. A helical membrane pass occupies residues 71-91; the sequence is MIGMIFGCYALFELLASLVFG. Residues 92 to 100 lie on the Cytoplasmic side of the membrane; sequence KYLVHIGAK. Residues 101-121 form a helical membrane-spanning segment; that stretch reads FMFIAGMFVSGGVTILFGVLD. The Extracellular portion of the chain corresponds to 122-127; the sequence is QLPEGP. Residues 128-148 traverse the membrane as a helical segment; that stretch reads IFIAMCFLVRIVDAIGFGAAI. Residues 149 to 167 are Cytoplasmic-facing; that stretch reads TASSSILAKAFPNNVATVM. The helical transmembrane segment at 168 to 188 threads the bilayer; it reads GSLEVFSGLGLVAGPPLGGLL. Over 189 to 195 the chain is Extracellular; that stretch reads YQSFGYE. The helical transmembrane segment at 196–216 threads the bilayer; sequence VPFIFLGCIVLLMIPLNLYIL. Residues 217 to 235 are Cytoplasmic-facing; the sequence is PSYAQESDPGKQSFWKLVT. The chain crosses the membrane as a helical span at residues 236–256; that stretch reads LPKMGLLAFVIISLSSCFGFL. Residues 257–274 lie on the Extracellular side of the membrane; the sequence is DPTLSLFVMEKFSLSTGY. Residues 275 to 295 form a helical membrane-spanning segment; the sequence is VGLVFLGLSLSYAISSPLFGL. Residues 296 to 306 lie on the Cytoplasmic side of the membrane; sequence LSDKMPTLRKW. A helical transmembrane segment spans residues 307–327; sequence LLVFGNLITAGCYMLLGPVPL. The Extracellular segment spans residues 328–333; that stretch reads LHIKSQ. A helical membrane pass occupies residues 334 to 354; sequence LWLLVLVLVVNGISAGMSIIP. Over 355–379 the chain is Cytoplasmic; that stretch reads TFPEMLSCAYANGFEDSISTLGLVS. The helical transmembrane segment at 380 to 400 threads the bilayer; it reads GLFGAMWSVGAFMGPILGGFL. Residues 401-409 lie on the Extracellular side of the membrane; that stretch reads CEKIGFEWA. A helical membrane pass occupies residues 410 to 430; the sequence is AAMQGLWTLLSGVSMALFYLW. Topologically, residues 431 to 459 are cytoplasmic; that stretch reads EDSTARRRSKAQNSLGTEEERAALLPNDT. The segment at 440-459 is disordered; sequence KAQNSLGTEEERAALLPNDT.

The protein belongs to the major facilitator superfamily. Widely expressed, with highest expression in the lung, pancreas and kidney. High expression in the CNS, particularly in the hypothalamus, the thalamus and the cerebellum. In the forebrain, abundantly expressed in the telencephalon, especially in the cerebral cortex layers, except layer 1, as well as in the induseum griseum, the piriform area, the taenia tecta, dorsal part and in the entorhinal area, lateral part. Lower levels in the bed anterior olfactory nucleus, posteroventral part and in layer two of the olfactory tubercle. In the amygdala, high levels observed in the intercalated nucleus and the medial nucleus. In the diencephalon, expressed in the nuclei in both the hypothalamus and thalamus. Among the hypothalamic areas, strongest expression in the arcuate nucleus and in the ventromedial nucleus, as well as in the suprachiasmatic nucleus, anterior nucleus, especially in its central part, and in the magnocellular division of the paraventricular nucleus. In the thalamus, highest levels in the medial habenula. Expression also observed in the paraventricular thalamic nucleus, parataenial nucleus, central medial nucleus, intermediodorsal nucleus and lateral dorsal nucleus. In the hindbrain, detected in the cerebellum and in the pons. In the midbrain and the medulla, expression levels were modest. In the midbrain, highest expression in the periaqueductal gray and all subdivisions of the interpeduncular nucleus, except for the caudal part. In the pons, the strongest labeling was seen in the nucleus incertus and in the tegmental nucleus. Expressed in bone marrow-derived mast cells (at protein level).

It is found in the cytoplasmic vesicle. The protein localises to the secretory vesicle membrane. It localises to the secretory vesicle. Its subcellular location is the synaptic vesicle membrane. It carries out the reaction spermine(in) + n H(+)(out) = spermine(out) + n H(+)(in). The catalysed reaction is spermidine(in) + n H(+)(out) = spermidine(out) + n H(+)(in). The enzyme catalyses serotonin(in) + n H(+)(out) = serotonin(out) + n H(+)(in). Functionally, proton-coupled polyamine antiporter involved in the translocation of polyamines from cytosol into secretory vesicles prior to their release via exocytosis. Uses the electrochemical proton gradient generated by a V-type proton-pumping ATPase to couple the efflux of protons with the uptake of a polyamine molecule. Facilitates vesicular storage of spermine and spermidine in astrocytes with an impact on glutamatergic neuronal transmission and memory formation. Upon antigen stimulation, regulates polyamine accumulation and release in mast cell secretory granules, which in turn potentiates mast cell degranulation and histamine secretion. The protein is MFS-type transporter SLC18B1 of Mus musculus (Mouse).